The following is a 250-amino-acid chain: Lectin 1 (250 aa).

Asn-119 carries an N-linked (GlcNAc...) asparagine; partial glycan. 2 residues coordinate Mn(2+): Glu-128 and Asp-130. Asp-130, Tyr-132, Asn-138, and Asp-141 together coordinate Ca(2+). Residues Asp-141 and His-146 each coordinate Mn(2+).

It belongs to the leguminous lectin family.

Functionally, di-N-acetylchitobiose specific lectin. The sequence is that of Lectin 1 from Laburnum alpinum (Scotch laburnum).